The sequence spans 360 residues: Phospho-N-acetylmuramoyl-pentapeptide-transferase (360 aa).

The next 10 membrane-spanning stretches (helical) occupy residues 26-46 (SIMA…KVIN), 73-93 (TMGG…WADL), 98-118 (VWFT…DDYW), 132-152 (WKYF…YAMG), 168-188 (VMPQ…VGTS), 199-219 (GLAI…AWAT), 236-256 (SGEL…FLWY), 263-283 (VFMG…IAVL), 288-308 (LLLL…ILQV), and 338-358 (VIVR…VTLK).

This sequence belongs to the glycosyltransferase 4 family. MraY subfamily. The cofactor is Mg(2+).

The protein resides in the cell inner membrane. The enzyme catalyses UDP-N-acetyl-alpha-D-muramoyl-L-alanyl-gamma-D-glutamyl-meso-2,6-diaminopimeloyl-D-alanyl-D-alanine + di-trans,octa-cis-undecaprenyl phosphate = di-trans,octa-cis-undecaprenyl diphospho-N-acetyl-alpha-D-muramoyl-L-alanyl-D-glutamyl-meso-2,6-diaminopimeloyl-D-alanyl-D-alanine + UMP. Its pathway is cell wall biogenesis; peptidoglycan biosynthesis. Its function is as follows. Catalyzes the initial step of the lipid cycle reactions in the biosynthesis of the cell wall peptidoglycan: transfers peptidoglycan precursor phospho-MurNAc-pentapeptide from UDP-MurNAc-pentapeptide onto the lipid carrier undecaprenyl phosphate, yielding undecaprenyl-pyrophosphoryl-MurNAc-pentapeptide, known as lipid I. The protein is Phospho-N-acetylmuramoyl-pentapeptide-transferase of Haemophilus ducreyi (strain 35000HP / ATCC 700724).